The sequence spans 151 residues: Transcriptional regulator MraZ (151 aa).

SpoVT-AbrB domains follow at residues 5–51 (AHEL…PVAE) and 81–124 (AEIL…GREQ).

It belongs to the MraZ family. Forms oligomers.

Its subcellular location is the cytoplasm. It is found in the nucleoid. The chain is Transcriptional regulator MraZ from Neisseria meningitidis serogroup A / serotype 4A (strain DSM 15465 / Z2491).